The following is an 864-amino-acid chain: DNA mismatch repair protein MutS (864 aa).

621–628 (GPNMGGKS) provides a ligand contact to ATP. The interval 804-833 (ETGKPESPAPVASRSSKPSMQADMFAEPQP) is disordered.

The protein belongs to the DNA mismatch repair MutS family.

In terms of biological role, this protein is involved in the repair of mismatches in DNA. It is possible that it carries out the mismatch recognition step. This protein has a weak ATPase activity. This is DNA mismatch repair protein MutS from Teredinibacter turnerae (strain ATCC 39867 / T7901).